The following is a 141-amino-acid chain: Lutropin subunit beta (141 aa).

The signal sequence occupies residues 1 to 20 (MEMLQGLLLLLLLSMGGAWA). Intrachain disulfides connect C29–C77, C43–C92, C46–C130, C54–C108, C58–C110, and C113–C120. N-linked (GlcNAc...) asparagine glycosylation is found at N33 and N50.

The protein belongs to the glycoprotein hormones subunit beta family. Heterodimer of a common alpha chain and a unique beta chain which confers biological specificity to thyrotropin, lutropin, follitropin and gonadotropin.

The protein localises to the secreted. In terms of biological role, promotes spermatogenesis and ovulation by stimulating the testes and ovaries to synthesize steroids. The sequence is that of Lutropin subunit beta (LHB) from Gorilla gorilla gorilla (Western lowland gorilla).